A 456-amino-acid polypeptide reads, in one-letter code: Cyclic AMP-responsive element-binding protein 3-like protein 3 (456 aa).

Disordered stretches follow at residues 1-20 and 47-120; these read MDGDLAIGKMASSTSPMGPI and GHGE…KGPC. Over 1–317 the chain is Cytoplasmic; sequence MDGDLAIGKM…STSKSAQTGT (317 aa). Positions 71-85 are enriched in polar residues; sequence DSDSPTWSPAASDSG. A bZIP domain is found at 238–301; sequence MLKKIRRKIR…LSLLEQLKKL (64 aa). The interval 240–269 is basic motif; it reads KKIRRKIRNKQSAQESRKKKKEYIDGLETR. The leucine-zipper stretch occupies residues 280–301; that stretch reads LQRKVLHLEKQNLSLLEQLKKL. Lysine 289 is covalently cross-linked (Glycyl lysine isopeptide (Lys-Gly) (interchain with G-Cter in ubiquitin)). A helical; Signal-anchor for type II membrane protein membrane pass occupies residues 318–338; that stretch reads CIAVLLFSFALIVLPSISPFA. The Lumenal segment spans residues 339-456; the sequence is SNRAESPGDF…VGLEAAGGEL (118 aa). 2 disordered regions span residues 365–423 and 435–456; these read RVAP…QGNS and CAPPEPAVSPGHVGLEAAGGEL. 2 N-linked (GlcNAc...) asparagine glycosylation sites follow: asparagine 408 and asparagine 415.

This sequence belongs to the bZIP family. ATF subfamily. In terms of assembly, binds DNA as a dimer. May form homodimers. Interacts with ATF6. Interacts with SYNV1/HRD1; this interaction leads to CREB3L3 ubiquitination and proteasomal degradation. In terms of processing, controlled by regulated intramembrane proteolysis (RIP). Following ER stress a fragment containing the cytoplasmic transcription factor domain is released by proteolysis. The cleavage seems to be performed sequentially by site-1 and site-2 proteases (PS1 and PS2). Post-translationally, N-glycosylation is required for optimal proteolytic activation. Ubiquitinated at Lys-289 by SYNV1/HRD1 via 'Lys-27'-linked ubiquitin.

Its subcellular location is the endoplasmic reticulum membrane. The protein resides in the nucleus. Functionally, transcription factor that may act during endoplasmic reticulum stress by activating unfolded protein response target genes. Activated in response to cAMP stimulation. In vitro, binds the cAMP response element (CRE). Activates transcription through box-B element and CRE. Seems to function synergistically with ATF6. In acute inflammatory response, may activate expression of acute phase response (APR) genes. May be involved in growth suppression. Regulates FGF21 transcription. Plays a crucial role in the regulation of triglyceride metabolism and is required for the maintenance of normal plasma triglyceride concentrations. In Bos taurus (Bovine), this protein is Cyclic AMP-responsive element-binding protein 3-like protein 3 (CREB3L3).